A 153-amino-acid polypeptide reads, in one-letter code: 3-hydroxyacyl-[acyl-carrier-protein] dehydratase FabZ (153 aa).

The active site involves His-54.

It belongs to the thioester dehydratase family. FabZ subfamily.

Its subcellular location is the cytoplasm. The enzyme catalyses a (3R)-hydroxyacyl-[ACP] = a (2E)-enoyl-[ACP] + H2O. Functionally, involved in unsaturated fatty acids biosynthesis. Catalyzes the dehydration of short chain beta-hydroxyacyl-ACPs and long chain saturated and unsaturated beta-hydroxyacyl-ACPs. This chain is 3-hydroxyacyl-[acyl-carrier-protein] dehydratase FabZ, found in Shewanella loihica (strain ATCC BAA-1088 / PV-4).